The chain runs to 301 residues: J domain-containing protein 1 (301 aa).

Residues 58 to 150 form the J domain; that stretch reads TPYDIFGIPK…KKKIVYDTTR (93 aa). A helical transmembrane segment spans residues 208-228; it reads WTVIGIICGLAICIEGTALLA.

Belongs to the DnaJ family.

It is found in the mitochondrion membrane. Probable chaperone. This Saccharomyces cerevisiae (strain ATCC 204508 / S288c) (Baker's yeast) protein is J domain-containing protein 1 (JID1).